We begin with the raw amino-acid sequence, 825 residues long: Osmosensitive cation channel TMEM63C (825 aa).

The Extracellular portion of the chain corresponds to 1 to 50 (MAFESWPAGGVRPVEELDVRSFLMEENSTAERCYRSHSRSSVLQGLPFGG). Residues 51 to 75 (VPTVLAINVVLWLILLLIFSCLRKA) traverse the membrane as a helical segment. At 76-141 (AWDYGRLALL…KDEEIRSKCG (66 aa)) the chain is on the cytoplasmic side. The interval 98 to 117 (EQSEKEKTPSDSSPSDSETK) is disordered. A helical transmembrane segment spans residues 142 to 174 (IDAVTYLSFQRHIILLMMVVCLLSLTIILPVNL). At 175–198 (SGNLLGDNPENFGRTTVVNVPAQN) the chain is on the extracellular side. The helical transmembrane segment at 199 to 223 (IFLWLHSIFALLYFVITVLCMAHHS) threads the bilayer. At 224–418 (SRLEYREDEK…IIWENLSVCG (195 aa)) the chain is on the cytoplasmic side. A helical membrane pass occupies residues 419–448 (PRWWLRCILLNILLFLLLFFLTTPAIIVNT). Over 449-463 (MDKFNVTRPVESLRN) the chain is Extracellular. The chain crosses the membrane as a helical span at residues 464–493 (PVITQFFPTLLLWAFSILLPFIVYYSSFFE). The Cytoplasmic portion of the chain corresponds to 494–497 (YHWT). A helical transmembrane segment spans residues 498–534 (RSGENQVTMHKCFLLLVFMVIILPSLGLSSLNLFFRW). Residues 535 to 557 (LFDVRFLDETDVKFQCVFLPDNG) are Extracellular-facing. Residues 558 to 590 (AFFVNYVITSSLIGTAMELLRIPALLVYSLRLC) form a helical membrane-spanning segment. At 591 to 610 (FAKSKAECIHVKISQAYEFQ) the chain is on the cytoplasmic side. Residues 611 to 629 (FGLEYAWTMCIFSVSMTYS) traverse the membrane as a helical segment. The Extracellular portion of the chain corresponds to 630–632 (ITC). The helical transmembrane segment at 633–657 (PVIVPFGLLYLVLKHMVDRYNIYYA) threads the bilayer. The Cytoplasmic segment spans residues 658 to 664 (YTPTKLN). A helical transmembrane segment spans residues 665-693 (QRIHAAAISQVVVAPILCMFWLLFFSVLR). Topologically, residues 694-698 (LGPVQ) are extracellular. The helical transmembrane segment at 699–719 (PITLFTFITLLCSIAFSCFGF) threads the bilayer. Over 720–825 (CMKKLRADRS…LLMDSPVAFQ (106 aa)) the chain is Cytoplasmic. The segment at 777–825 (SPAHQSYGTMVNSQSSVRDAEEDEEKDLEETLETELKDDLLMDSPVAFQ) is disordered. Over residues 779 to 793 (AHQSYGTMVNSQSSV) the composition is skewed to polar residues. Residues 796 to 809 (AEEDEEKDLEETLE) are compositionally biased toward acidic residues.

Belongs to the CSC1 (TC 1.A.17) family. Monomer.

It localises to the endoplasmic reticulum membrane. Its subcellular location is the cell membrane. The enzyme catalyses Ca(2+)(in) = Ca(2+)(out). In terms of biological role, acts as an osmosensitive cation channel preferentially activated upon hypotonic stress. In contrast to tmem63b, does not show phospholipid scramblase activity. Required for the functional integrity of the kidney glomerular filtration barrier. This Danio rerio (Zebrafish) protein is Osmosensitive cation channel TMEM63C (tmem63c).